The primary structure comprises 142 residues: Large ribosomal subunit protein uL11 (142 aa).

It belongs to the universal ribosomal protein uL11 family. In terms of assembly, part of the ribosomal stalk of the 50S ribosomal subunit. Interacts with L10 and the large rRNA to form the base of the stalk. L10 forms an elongated spine to which L12 dimers bind in a sequential fashion forming a multimeric L10(L12)X complex. Post-translationally, one or more lysine residues are methylated.

Its function is as follows. Forms part of the ribosomal stalk which helps the ribosome interact with GTP-bound translation factors. In Desulfitobacterium hafniense (strain DSM 10664 / DCB-2), this protein is Large ribosomal subunit protein uL11.